Reading from the N-terminus, the 476-residue chain is Bifunctional protein HldE (476 aa).

Residues 1 to 319 (MKVSLPAFEK…EALALHHGES (319 aa)) form a ribokinase region. 195–198 (NMSE) contacts ATP. Asp-264 is an active-site residue. The interval 345-476 (MTNGCFDILH…AIIQNIMANQ (132 aa)) is cytidylyltransferase.

This sequence in the N-terminal section; belongs to the carbohydrate kinase PfkB family. In the C-terminal section; belongs to the cytidylyltransferase family. As to quaternary structure, homodimer.

The catalysed reaction is D-glycero-beta-D-manno-heptose 7-phosphate + ATP = D-glycero-beta-D-manno-heptose 1,7-bisphosphate + ADP + H(+). The enzyme catalyses D-glycero-beta-D-manno-heptose 1-phosphate + ATP + H(+) = ADP-D-glycero-beta-D-manno-heptose + diphosphate. It participates in nucleotide-sugar biosynthesis; ADP-L-glycero-beta-D-manno-heptose biosynthesis; ADP-L-glycero-beta-D-manno-heptose from D-glycero-beta-D-manno-heptose 7-phosphate: step 1/4. The protein operates within nucleotide-sugar biosynthesis; ADP-L-glycero-beta-D-manno-heptose biosynthesis; ADP-L-glycero-beta-D-manno-heptose from D-glycero-beta-D-manno-heptose 7-phosphate: step 3/4. Its function is as follows. Catalyzes the phosphorylation of D-glycero-D-manno-heptose 7-phosphate at the C-1 position to selectively form D-glycero-beta-D-manno-heptose-1,7-bisphosphate. In terms of biological role, catalyzes the ADP transfer from ATP to D-glycero-beta-D-manno-heptose 1-phosphate, yielding ADP-D-glycero-beta-D-manno-heptose. The sequence is that of Bifunctional protein HldE from Shewanella baltica (strain OS185).